Here is a 76-residue protein sequence, read N- to C-terminus: MAQPDSSGLAEVLDRVLDKGVVVDVWARVSLVGIEILTVEARVVAASVDTFLHYAEEIAKIEQAELTAGAEAAPEA.

Binds to GvpF1 stretches follow at residues 1–22 and 2–43; these read MAQP…KGVV and AQPD…EARV. Positions 9-19 are alpha helix 1; that stretch reads LAEVLDRVLDK. A beta-strand 1 region spans residues 23-31; the sequence is VDVWARVSL. The tract at residues 32 to 34 is beta turn; the sequence is VGI. Residues 35–43 are beta-strand 2; it reads EILTVEARV. The interval 48-67 is alpha helix 2; the sequence is VDTFLHYAEEIAKIEQAELT.

The protein belongs to the gas vesicle GvpA family. Major component of the gas vesicle shell which is 2 nm thick and consists of a single layer of the protein. It forms 4.6 nm-wide ribs nearly perpendicular to the long axis of the vesicle. Modeled as antiparallel homodimers. The ribs form a low-pitch helix rather than a stack of hoops. Interacts with GvpF1 via its N-terminus (residues 1-43) in early growth stages, none of the other GvpG1 to GvpM1 proteins were seen to directly bind GvpA1 in H.volcanii experiments. Might interact with GvpJ1. Might interact with GvpG1, GvpH1, GvpJ1, GvpM1, GvpN1 and GvpO1.

The protein resides in the gas vesicle shell. In terms of biological role, gas vesicles are hollow, gas filled proteinaceous nanostructures found in several microbial planktonic microorganisms. They allow positioning of halobacteria at the optimal depth for growth in the poorly aerated shallow brine pools of their habitat. GvpA forms the protein shell. The critical collapse pressure (CCP) of p-vac gas vesicles is 0.66 MPa; mutating residues in p-gvpA to those found in c-gvpA increases the CCP. These residues partially and independently control the width and strength of gas vesicles. In stationary phase gas vesicles, about 30 times more GvpA1 is found than GvpA2. Functionally, expression of a 9.5 kb p-vac DNA fragment containing 2 divergently transcribed regions (gvpD-gvpE-gvpF-gvpG-gvpH-gvpI-gvpJ-gvpK-gvpL-gvpM and gvpA-gvpC-gvpN-gvpO) allows H.volcanii to produce gas vesicles. All site-directed mutagenesis is tested in H.volcanii. A minimal gas vesicle can be made in H.volcanii by gvpA1-gvpO1 plus gvpF1-gvpG1-gvpJ1-gvpK1-gvpL1-gvpM1; lack of enough GvpJ1 prevents their formation. A similar region restores gas vesicle production in H.halobium without the p-vac locus, but it still has the c-vac locus. The polypeptide is Gas vesicle protein A1 (Halobacterium salinarum (strain ATCC 700922 / JCM 11081 / NRC-1) (Halobacterium halobium)).